We begin with the raw amino-acid sequence, 1001 residues long: MPSTNRAGSLKDPEIAELFFKEDPEKLFTDLREIGHGSFGAVYFARDVRTNEVVAIKKMSYSGKQSTEKWQDIIKEVKFLQRIKHPNSIEYKGCYLREHTAWLVMEYCLGSASDLLEVHKKPLQEVEIAAITHGALQGLAYLHSHTMIHRDIKAGNILLTEPGQVKLADFGSASMASPANSFVGTPYWMAPEVILAMDEGQYDGKVDVWSLGITCIELAERKPPLFNMNAMSALYHIAQNESPTLQSNEWSDYFRNFVDSCLQKIPQDRPTSEELLKHMFVLRERPETVLIDLIQRTKDAVRELDNLQYRKMKKLLFQEAHNGPAVEAQEEEEEQDHGVGRTGTVNSVGSNQSIPSMSISASSQSSSVNSLPDASDDKSELDMMEGDHTVMSNSSVIHLKPEEENYQEEGDPRTRASDPQSPPQVSRHKSHYRNREHFATIRTASLVTRQMQEHEQDSELREQMSGYKRMRRQHQKQLMTLENKLKAEMDEHRLRLDKDLETQRNNFAAEMEKLIKKHQAAMEKEAKVMANEEKKFQQHIQAQQKKELNSFLESQKREYKLRKEQLKEELNENQSTPKKEKQEWLSKQKENIQHFQAEEEANLLRRQRQYLELECRRFKRRMLLGRHNLEQDLVREELNKRQTQKDLEHAMLLRQHESMQELEFRHLNTIQKMRCELIRLQHQTELTNQLEYNKRRERELRRKHVMEVRQQPKSLKSKELQIKKQFQDTCKIQTRQYKALRNHLLETTPKSEHKAVLKRLKEEQTRKLAILAEQYDHSINEMLSTQALRLDEAQEAECQVLKMQLQQELELLNAYQSKIKMQAEAQHDRELRELEQRVSLRRALLEQKIEEEMLALQNERTERIRSLLERQAREIEAFDSESMRLGFSNMVLSNLSPEAFSHSYPGASSWSHNPTGGPGPHWGHPMGGTPQAWGHPMQGGPQPWGHPSGPMQGVPRGSSMGVRNSPQALRRTASGGRTEQGMSRSTSVTSQISNGSHMSYT.

At S9 the chain carries Phosphoserine. The Protein kinase domain maps to 28-281 (FTDLREIGHG…SEELLKHMFV (254 aa)). Residues 34–42 (IGHGSFGAV) and K57 each bind ATP. The active-site Proton acceptor is D151. Disordered regions lie at residues 324 to 380 (PAVE…DKSE) and 404 to 433 (ENYQ…SHYR). The span at 350–370 (SNQSIPSMSISASSQSSSVNS) shows a compositional bias: low complexity. Phosphoserine is present on residues S421 and S445. A coiled-coil region spans residues 458–651 (SELREQMSGY…QTQKDLEHAM (194 aa)). A disordered region spans residues 567 to 587 (KEELNENQSTPKKEKQEWLSK). Over residues 577–587 (PKKEKQEWLSK) the composition is skewed to basic and acidic residues. The residue at position 669 (T669) is a Phosphothreonine. Positions 754–877 (KAVLKRLKEE…LERQAREIEA (124 aa)) form a coiled coil. A disordered region spans residues 905–1001 (PGASSWSHNP…ISNGSHMSYT (97 aa)). Residues 921-930 (HWGHPMGGTP) are compositionally biased toward low complexity. Residue S965 is modified to Phosphoserine. The segment covering 975-1001 (GGRTEQGMSRSTSVTSQISNGSHMSYT) has biased composition (polar residues).

It belongs to the protein kinase superfamily. STE Ser/Thr protein kinase family. STE20 subfamily. In terms of assembly, self-associates. Interacts with MAP2K3. Interacts with SPRED1. Interacts with TESK1; the interaction inhibits TAOK1 kinase activity. Interacts with MAP3K7. In terms of processing, proteolytically processed by caspase-3 (CASP3). Autophosphorylated. Phosphorylated by ATM in response to DNA damage. Phosphorylated by LRRK2.

It is found in the cytoplasm. The enzyme catalyses L-seryl-[protein] + ATP = O-phospho-L-seryl-[protein] + ADP + H(+). It carries out the reaction L-threonyl-[protein] + ATP = O-phospho-L-threonyl-[protein] + ADP + H(+). Its activity is regulated as follows. Serine/threonine-protein kinase activity is inhibited by SPRED1. Functionally, serine/threonine-protein kinase involved in various processes such as p38/MAPK14 stress-activated MAPK cascade, DNA damage response and regulation of cytoskeleton stability. Phosphorylates MAP2K3, MAP2K6 and MARK2. Acts as an activator of the p38/MAPK14 stress-activated MAPK cascade by mediating phosphorylation and subsequent activation of the upstream MAP2K3 and MAP2K6 kinases. Involved in G-protein coupled receptor signaling to p38/MAPK14. In response to DNA damage, involved in the G2/M transition DNA damage checkpoint by activating the p38/MAPK14 stress-activated MAPK cascade, probably by mediating phosphorylation of MAP2K3 and MAP2K6. Acts as a regulator of cytoskeleton stability by phosphorylating 'Thr-208' of MARK2, leading to activate MARK2 kinase activity and subsequent phosphorylation and detachment of MAPT/TAU from microtubules. Also acts as a regulator of apoptosis: regulates apoptotic morphological changes, including cell contraction, membrane blebbing and apoptotic bodies formation via activation of the MAPK8/JNK cascade. During fetal development, it plays an essential role in the regulation of neuronal differentiation and migration to the cortical plate. The chain is Serine/threonine-protein kinase TAO1 (Taok1) from Mus musculus (Mouse).